The sequence spans 293 residues: Nucleotide-binding protein BBR47_52620 (293 aa).

Residue 17–24 (GMSGAGKT) participates in ATP binding. 68–71 (DLRG) contributes to the GTP binding site.

The protein belongs to the RapZ-like family.

In terms of biological role, displays ATPase and GTPase activities. This Brevibacillus brevis (strain 47 / JCM 6285 / NBRC 100599) protein is Nucleotide-binding protein BBR47_52620.